The sequence spans 404 residues: MDFESFFKNELDGLHQEGRYRVFADLARHRGSFPKATRYTADGAQEVTVWCSNDYLGMGQCPIVTEAMKNAIDECGAGAGGTRNISGTNHYHVLLERELADLHGKESALLFTSGYVSNWAALGTLCSKIPGVIVFSDAGNHASMIEGIRHSKCERVIFKHNSVADLEAKLAAADPRAPKIIAFESVYSMDGDIAPIREFCDLADKYGAMTYLDEVHAVGMYGPRGGGIAEREGLMHRLTVIEGTLGKAFGVMGGYITGSAALCDFIRSFASGFIFTTALPPALAAGALASIRHLKESQVERFAHQERVRRLRSLLDQRGIPHMVNPSHIVPVIVGDAAKCKWISDLLLDNFGIYVQPINYPTVPKKTERLRITPTPMHSDADIDHLVSALHSLWSRCALARAVA.

Substrate-binding residues include Arg-21 and Ser-136. Residues Ser-188, His-216, and Thr-244 each coordinate pyridoxal 5'-phosphate. Lys-247 is a catalytic residue. Position 247 is an N6-(pyridoxal phosphate)lysine (Lys-247). Thr-276 and Thr-277 together coordinate pyridoxal 5'-phosphate. A substrate-binding site is contributed by Thr-362.

Belongs to the class-II pyridoxal-phosphate-dependent aminotransferase family. In terms of assembly, homodimer. Requires pyridoxal 5'-phosphate as cofactor.

The catalysed reaction is succinyl-CoA + glycine + H(+) = 5-aminolevulinate + CO2 + CoA. The protein operates within porphyrin-containing compound metabolism; protoporphyrin-IX biosynthesis; 5-aminolevulinate from glycine: step 1/1. The polypeptide is 5-aminolevulinate synthase (hemA) (Rhizobium meliloti (strain 1021) (Ensifer meliloti)).